The chain runs to 147 residues: Sec-independent protein translocase protein TatB (147 aa).

A helical transmembrane segment spans residues 1 to 21 (MFDVSFTELMVIGVIALVVIG). Residues 67 to 147 (DETARSMQTS…DKTPPTGSAT (81 aa)) form a disordered region. Residues 93–103 (AELDDTARDAS) show a composition bias toward basic and acidic residues. Composition is skewed to low complexity over residues 109-120 (ADAPAEPAPAVA) and 129-147 (APPA…GSAT).

It belongs to the TatB family. In terms of assembly, the Tat system comprises two distinct complexes: a TatABC complex, containing multiple copies of TatA, TatB and TatC subunits, and a separate TatA complex, containing only TatA subunits. Substrates initially bind to the TatABC complex, which probably triggers association of the separate TatA complex to form the active translocon.

It localises to the cell inner membrane. Functionally, part of the twin-arginine translocation (Tat) system that transports large folded proteins containing a characteristic twin-arginine motif in their signal peptide across membranes. Together with TatC, TatB is part of a receptor directly interacting with Tat signal peptides. TatB may form an oligomeric binding site that transiently accommodates folded Tat precursor proteins before their translocation. The polypeptide is Sec-independent protein translocase protein TatB (Bordetella pertussis (strain Tohama I / ATCC BAA-589 / NCTC 13251)).